A 217-amino-acid chain; its full sequence is uncharacterized protein (217 aa).

Helical transmembrane passes span 151 to 171 and 177 to 197; these read LIPF…HSLF and ISFH…FILF.

Its subcellular location is the mitochondrion membrane. This is an uncharacterized protein from Schizosaccharomyces pombe (strain 972 / ATCC 24843) (Fission yeast).